The primary structure comprises 199 residues: Recombination protein RecR (199 aa).

The C4-type zinc finger occupies C57–C72. The 96-residue stretch at T80–P175 folds into the Toprim domain.

Belongs to the RecR family.

Functionally, may play a role in DNA repair. It seems to be involved in an RecBC-independent recombinational process of DNA repair. It may act with RecF and RecO. This Methylobacillus flagellatus (strain ATCC 51484 / DSM 6875 / VKM B-1610 / KT) protein is Recombination protein RecR.